Reading from the N-terminus, the 236-residue chain is Peptidase E (236 aa).

Active-site charge relay system residues include Ser-122, Asp-137, and His-159.

Belongs to the peptidase S51 family.

It is found in the cytoplasm. It carries out the reaction Dipeptidase E catalyzes the hydrolysis of dipeptides Asp-|-Xaa. It does not act on peptides with N-terminal Glu, Asn or Gln, nor does it cleave isoaspartyl peptides.. In terms of biological role, hydrolyzes dipeptides containing N-terminal aspartate residues. May play a role in allowing the cell to use peptide aspartate to spare carbon otherwise required for the synthesis of the aspartate family of amino acids. In Shewanella sp. (strain ANA-3), this protein is Peptidase E.